Consider the following 190-residue polypeptide: Xanthine phosphoribosyltransferase (190 aa).

Xanthine contacts are provided by Leu20 and Asn27. 128–132 serves as a coordination point for 5-phospho-alpha-D-ribose 1-diphosphate; that stretch reads ANGQA. Lys156 contacts xanthine.

This sequence belongs to the purine/pyrimidine phosphoribosyltransferase family. Xpt subfamily. In terms of assembly, homodimer.

It is found in the cytoplasm. The catalysed reaction is XMP + diphosphate = xanthine + 5-phospho-alpha-D-ribose 1-diphosphate. It functions in the pathway purine metabolism; XMP biosynthesis via salvage pathway; XMP from xanthine: step 1/1. Converts the preformed base xanthine, a product of nucleic acid breakdown, to xanthosine 5'-monophosphate (XMP), so it can be reused for RNA or DNA synthesis. The chain is Xanthine phosphoribosyltransferase from Pediococcus pentosaceus (strain ATCC 25745 / CCUG 21536 / LMG 10740 / 183-1w).